The primary structure comprises 165 residues: Ubiquitin D (165 aa).

Ubiquitin-like domains are found at residues 6-81 (SCLC…LKVV) and 90-163 (LFLV…CYCI).

Belongs to the ubiquitin D family. In terms of assembly, interacts directly with the 26S proteasome. Interacts with NUB1; this interaction facilitates the linking of UBD-conjugated target protein to the proteasome complex and accelerates its own degradation and that of its conjugates. Interacts (via ubiquitin-like 1 domain) with the spindle checkpoint protein MAD2L1 during mitosis. Present in aggresomes of proteasome inhibited cells. Interacts with HDAC6 under proteasome impairment conditions. Forms a thioester with UBA6 in cells stimulated with tumor necrosis factor-alpha (TNFa) and interferon-gamma (IFNg). Interacts with SQSTM1 and TP53/p53. Can be acetylated. In terms of tissue distribution, constitutively expressed in mature dendritic cells and B-cells. Mostly expressed in the reticuloendothelial system (e.g. thymus, spleen), the gastrointestinal system, kidney, lung and prostate gland.

The protein resides in the nucleus. Its subcellular location is the cytoplasm. Functionally, ubiquitin-like protein modifier which can be covalently attached to target proteins and subsequently leads to their degradation by the 26S proteasome, in a NUB1-dependent manner. Conjugation to the target protein is activated by UBA6 via adenylation of its C-terminal glycine. Promotes the expression of the proteasome subunit beta type-9 (PSMB9/LMP2). Regulates TNF-alpha-induced and LPS-mediated activation of the central mediator of innate immunity NF-kappa-B by promoting TNF-alpha-mediated proteasomal degradation of ubiquitinated-I-kappa-B-alpha. Required for TNF-alpha-induced p65 nuclear translocation in renal tubular epithelial cells (RTECs). May be involved in dendritic cell (DC) maturation, the process by which immature dendritic cells differentiate into fully competent antigen-presenting cells that initiate T-cell responses. Mediates mitotic non-disjunction and chromosome instability, in long-term in vitro culture and cancers, by abbreviating mitotic phase and impairing the kinetochore localization of MAD2L1 during the prometaphase stage of the cell cycle. May be involved in the formation of aggresomes when proteasome is saturated or impaired. Mediates apoptosis in a caspase-dependent manner, especially in renal epithelium and tubular cells during renal diseases such as polycystic kidney disease and Human immunodeficiency virus (HIV)-associated nephropathy (HIVAN). The protein is Ubiquitin D (UBD) of Homo sapiens (Human).